We begin with the raw amino-acid sequence, 34 residues long: Tau-theraphotoxin-Pc1c (34 aa).

Disulfide bonds link Cys-2–Cys-16, Cys-9–Cys-21, and Cys-15–Cys-28. Phe-34 carries the phenylalanine amide modification.

It belongs to the neurotoxin 10 (Hwtx-1) family. 62 (Vatx) subfamily. As to expression, expressed by the venom gland.

The protein localises to the secreted. In terms of biological role, selectively activates mammalian TRPV1, or capsaicin receptor, a non-selective cation channel expressed by sensory neurons of the pain pathway. Is more potent than VaTx1 and VaTx2. Interacts with distinct regions of the channel than capsaicin, since it only acts on the extracellular face of the channel, and capsaicin binds to the cytosolic side. Also activates avian TRPV1, which is insensitive to capsaicin. In mice, elicits pain-related behaviors, such as licking and flinching of the affected limb. The paw of toxin-injected mice shows substantial edema. The chain is Tau-theraphotoxin-Pc1c from Psalmopoeus cambridgei (Trinidad chevron tarantula).